Here is a 297-residue protein sequence, read N- to C-terminus: MNYFEGTVLGLVQGLTEFLPVSSSAHLRITAALAGWDDPGAAFTAVTQIGTETAVLIYFRRDIARIVRAWALSWTRREMRKDTDARVGWLVLLGTIPIGLLGVTLQDAIEGPFRDLRLIATTLIVLGLILGGADWYASKGRPRGRHSLPRPRKTLRDLSVRDGLLYGLAQSAALIPGVSRSGATISGGLLLGYTREAAARYSFLLAMPAVLASGVFELKSIGGDREGGDGEEVSWGPTIVATVVAFATGYAAIAWFLRYISTRSFAPFVLYRVALGLLLLALLAGGAISADAGAAAD.

6 helical membrane-spanning segments follow: residues 39–59 (PGAA…LIYF), 89–109 (WLVL…QDAI), 118–138 (LIAT…WYAS), 203–223 (FLLA…SIGG), 237–257 (PTIV…AWFL), and 268–288 (FVLY…GGAI).

This sequence belongs to the UppP family.

The protein resides in the cell membrane. The enzyme catalyses di-trans,octa-cis-undecaprenyl diphosphate + H2O = di-trans,octa-cis-undecaprenyl phosphate + phosphate + H(+). Catalyzes the dephosphorylation of undecaprenyl diphosphate (UPP). Confers resistance to bacitracin. This chain is Undecaprenyl-diphosphatase 3, found in Frankia alni (strain DSM 45986 / CECT 9034 / ACN14a).